Reading from the N-terminus, the 234-residue chain is Sugar fermentation stimulation protein A (234 aa).

The H-T-H motif DNA-binding region spans 201 to 220; it reads LLSEAQQRGVEILAYKAELS.

This sequence belongs to the SfsA family.

In terms of biological role, binds to DNA non-specifically. Could be a regulatory factor involved in maltose metabolism. The polypeptide is Sugar fermentation stimulation protein A (Escherichia coli O7:K1 (strain IAI39 / ExPEC)).